The primary structure comprises 480 residues: Reticulophagy regulator 1 (480 aa).

The span at 1–10 shows a compositional bias: basic and acidic residues; it reads MASPAPEEHA. Residues 1–41 form a disordered region; that stretch reads MASPAPEEHATQGCPATEEQEPRPGVPGEEAGPEGAGPQVE. Residues 1-43 lie on the Cytoplasmic side of the membrane; it reads MASPAPEEHATQGCPATEEQEPRPGVPGEEAGPEGAGPQVEEA. Residues 44–64 form a helical membrane-spanning segment; it reads AGRVAAALTWLLGEPVLWLGW. Residues 65 to 78 lie on the Lumenal side of the membrane; it reads RADELLSWKRPLRS. Residues 67 to 216 form a reticulon homology domain region; the sequence is DELLSWKRPL…LLFAFLCPLF (150 aa). The helical transmembrane segment at 79–99 threads the bilayer; the sequence is LLAFLGANLLFWFLALTPWRV. The Cytoplasmic portion of the chain corresponds to 100-101; sequence YH. The chain crosses the membrane as a helical span at residues 102 to 122; it reads LISVMILGRVIMQIIKDMVLS. The Lumenal portion of the chain corresponds to 123–191; the sequence is RARGAQLWRS…LVCSVCTFFT (69 aa). S132 is subject to Phosphoserine. Phosphoserine; by CAMK2B is present on S134. S136 is modified (phosphoserine). The helical transmembrane segment at 192-212 threads the bilayer; sequence ILGSYIPGVILSYLLLLFAFL. The Cytoplasmic portion of the chain corresponds to 213–480; sequence CPLFKCNDIG…GFLSNLLGGH (268 aa). Residues 302 to 313 are compositionally biased toward polar residues; that stretch reads FNLSEGYTPQTD. The disordered stretch occupies residues 302-348; sequence FNLSEGYTPQTDTSDDLDRPSEEVFSRDLSDFPSLENGAGTNDEDEL. Positions 317 to 331 are enriched in basic and acidic residues; it reads DLDRPSEEVFSRDLS. The LIR motif signature appears at 436 to 441; the sequence is DDFELL. A disordered region spans residues 450 to 480; it reads ESELGLTQDQGAEAQQSKKSSGFLSNLLGGH. Polar residues predominate over residues 454 to 473; it reads GLTQDQGAEAQQSKKSSGFL.

It belongs to the RETREG family. As to quaternary structure, homooligomer; oligomerization is enhanced following endoplasmic reticulum stress and is mediated by the reticulon homology domain. Interacts with ATG8 family modifier proteins MAP1LC3A, MAP1LC3B, GABARAP, GABARAPL1 and GABARAPL2. Post-translationally, phosphorylation at Ser-134 by CAMK2B enhances oligomerization and membrane scission and reticulophagy activity.

It is found in the golgi apparatus. It localises to the cis-Golgi network membrane. The protein resides in the endoplasmic reticulum membrane. Endoplasmic reticulum (ER)-anchored autophagy regulator which mediates ER delivery into lysosomes through sequestration into autophagosomes. Promotes membrane remodeling and ER scission via its membrane bending capacity and targets the fragments into autophagosomes via interaction with ATG8 family proteins. Active under basal conditions. Required for collagen quality control in a LIR motif-dependent manner. Required for long-term survival of nociceptive and autonomic ganglion neurons. This is Reticulophagy regulator 1 from Rattus norvegicus (Rat).